A 566-amino-acid chain; its full sequence is MKQSKVFIPTMKEVPAGAEALSHRLLLKAGLIKQSTSGIYSYLPLAARVLNNIEAIVREEMERIDAVEILMPALQQAELWEESGRWSAYGPELMRLQDRNGREFALGPTHEEVVTSIVRDELKSYKQLPLTLFQIQSKYRDEKRPRFGLLRGREFIMKDAYSFHADEDSLDASYQDMYNAYGRIFKRVGINARPVVADSGAIGGSHTHEFMALSEIGEDTIVYSEQSDYAANIEKAEVVYQANEKHEDLQPLTKIETPNIHTAQELATFLDKPLDEITKSMVFKIDGEFIMVLVRGHHELNDIKLKAYFGTDNIELASEDEIVNLLGAKPGSLGPVFDKEIKVYADNFIQDLNNIVVGANEDGYHLLNANIGRDFEVDAFGDFRFILEGEPLSDGSGPARFAEGIEVGQVFKLGTKYSESMNATFLDNQGKAQPLLMGCYGIGVSRTLSAIVEQNNDENGIIWPKSVTPFDLHLITINPKKDDQRELADQLYTQLKENYDVLYDDRKERAGVKFNDADLIGLPVRVVVGKNAAEGIVEVKRRDTGESEDVHVDNLINYVNTLYSNI.

It belongs to the class-II aminoacyl-tRNA synthetase family. ProS type 1 subfamily. In terms of assembly, homodimer.

It localises to the cytoplasm. The enzyme catalyses tRNA(Pro) + L-proline + ATP = L-prolyl-tRNA(Pro) + AMP + diphosphate. In terms of biological role, catalyzes the attachment of proline to tRNA(Pro) in a two-step reaction: proline is first activated by ATP to form Pro-AMP and then transferred to the acceptor end of tRNA(Pro). As ProRS can inadvertently accommodate and process non-cognate amino acids such as alanine and cysteine, to avoid such errors it has two additional distinct editing activities against alanine. One activity is designated as 'pretransfer' editing and involves the tRNA(Pro)-independent hydrolysis of activated Ala-AMP. The other activity is designated 'posttransfer' editing and involves deacylation of mischarged Ala-tRNA(Pro). The misacylated Cys-tRNA(Pro) is not edited by ProRS. The sequence is that of Proline--tRNA ligase from Staphylococcus saprophyticus subsp. saprophyticus (strain ATCC 15305 / DSM 20229 / NCIMB 8711 / NCTC 7292 / S-41).